The chain runs to 341 residues: Aromatic amino acid aminotransferase (341 aa).

The residue at position 213 (K213) is an N6-(pyridoxal phosphate)lysine.

This sequence belongs to the class-II pyridoxal-phosphate-dependent aminotransferase family. Homodimer. The cofactor is pyridoxal 5'-phosphate.

It catalyses the reaction an aromatic L-alpha-amino acid + 2-oxoglutarate = an aromatic oxo-acid + L-glutamate. Aminotransferase that catalyzes the conversion of aromatic amino acids and 2-oxoglutarate into corresponding aromatic oxo acids and L-glutamate. May catalyze the transamination reaction in phenylalanine biosynthesis. This is Aromatic amino acid aminotransferase from Corynebacterium glutamicum (strain ATCC 13032 / DSM 20300 / JCM 1318 / BCRC 11384 / CCUG 27702 / LMG 3730 / NBRC 12168 / NCIMB 10025 / NRRL B-2784 / 534).